The primary structure comprises 297 residues: Streptogrisin-A (297 aa).

The first 38 residues, 1 to 38, serve as a signal peptide directing secretion; sequence MTFKRFSPLSSTSRYARLLAVASGLVAAAALATPSAVA. Residues 39 to 115 constitute a propeptide that is removed on maturation; it reads APEAESKATV…VKRAEGKFTP (77 aa). Residues C130 and C150 are joined by a disulfide bond. Residues H149, D171, and S253 each act as charge relay system in the active site. The cysteines at positions 247 and 274 are disulfide-linked.

The protein belongs to the peptidase S1 family. In terms of assembly, monomer.

It carries out the reaction Hydrolysis of proteins with specificity similar to chymotrypsin.. In terms of biological role, has a primary specificity for large aliphatic or aromatic amino acids. This Streptomyces griseus protein is Streptogrisin-A (sprA).